A 111-amino-acid chain; its full sequence is DIVLTQSPASLAVSLGQRATISCRASKSVSTSGYSYMHWYQQKPGQPPKLLIYLASSLESGVPARFSGSGSGTDFTLNIQPVEEEDAAIYYCQHSRELPLTFGAGTKLELK.

Residues 1–23 (DIVLTQSPASLAVSLGQRATISC) are framework-1. Cysteine 23 and cysteine 92 are oxidised to a cystine. Residues 24 to 38 (RASKSVSTSGYSYMH) are complementarity-determining-1. The interval 39–53 (WYQQKPGQPPKLLIY) is framework-2. Residues 54-60 (LASSLES) form a complementarity-determining-2 region. The interval 61-92 (GVPARFSGSGSGTDFTLNIQPVEEEDAAIYYC) is framework-3. The segment at 93-101 (QHSRELPLT) is complementarity-determining-3. Residues 102–111 (FGAGTKLELK) are framework-4.

In Mus musculus (Mouse), this protein is Ig kappa chain V-III region PC 2485/PC 4039.